The following is a 323-amino-acid chain: Cytoskeleton protein RodZ (323 aa).

The Cytoplasmic portion of the chain corresponds to 1–111 (MNTEASQDKT…LGKRRKKRDG (111 aa)). Positions 19–71 (LRQAREQLGLSQQAVAERLCLKMSTVRDIEEDNLSADLASTFVRGYIRSYAKL) constitute an HTH cro/C1-type domain. The segment at residues 30–49 (QQAVAERLCLKMSTVRDIEE) is a DNA-binding region (H-T-H motif). Residues 112–132 (WLMSFTWLIVFVVVGLTGAWW) traverse the membrane as a helical; Signal-anchor for type II membrane protein segment. Residues 133–323 (WQNHKAQQEE…RVARLTVAAQ (191 aa)) lie on the Periplasmic side of the membrane. Composition is skewed to polar residues over residues 149-172 (QSSA…NADN) and 179-214 (NGST…SPSQ). A disordered region spans residues 149–236 (QSSAQLSQNN…APLPTADAGV (88 aa)). The segment covering 215–234 (TTLPETTPAAPTAPLPTADA) has biased composition (low complexity).

Belongs to the RodZ family.

It is found in the cell inner membrane. Cytoskeletal protein that is involved in cell-shape control through regulation of the length of the long axis. The protein is Cytoskeleton protein RodZ of Serratia proteamaculans (strain 568).